A 75-amino-acid chain; its full sequence is MSHTIVTEKCIGVAECVNACPVSCIHKGEGKNTINKDWYWIDFAACIDCSICIQVCPTKGAILDKEEPSLQRKLR.

2 consecutive 4Fe-4S ferredoxin-type domains span residues 2–30 (SHTI…KGEG) and 37–68 (DWYW…KEEP). [3Fe-4S] cluster contacts are provided by Cys-10 and Cys-16. Cys-20, Cys-46, Cys-49, and Cys-52 together coordinate [4Fe-4S] cluster. Cys-56 lines the [3Fe-4S] cluster pocket.

Requires [4Fe-4S] cluster as cofactor. [3Fe-4S] cluster serves as cofactor.

The protein localises to the plastid. The protein resides in the chloroplast. This is an uncharacterized protein from Porphyra purpurea (Red seaweed).